A 297-amino-acid polypeptide reads, in one-letter code: DNA excision repair protein ERCC-1 (297 aa).

The residue at position 1 (Met1) is an N-acetylmethionine. The disordered stretch occupies residues 1–39 (MDPGKDKEGVPQPSGPPARKKFVIPLDEDEVPPGVAKPL). The short motif at 17–23 (PARKKFV) is the Nuclear localization signal element. Glycyl lysine isopeptide (Lys-Gly) (interchain with G-Cter in SUMO2) cross-links involve residues Lys21 and Lys37. The DNA-binding element occupies 134-156 (QSTCALFLSLRYHNLHPDYIHGR). Residues 220–297 (ADLLMEKLEQ…VLHEPFLKVP (78 aa)) are hhH2, dimerization with ERCC4/XPF. Lys243 participates in a covalent cross-link: Glycyl lysine isopeptide (Lys-Gly) (interchain with G-Cter in SUMO2).

This sequence belongs to the ERCC1/RAD10/SWI10 family. In terms of assembly, heterodimer composed of ERCC1 isoform 1 and ERCC4/XPF. Interacts with USP45. Does not interact with ERCC4/XPF. In terms of processing, ubiquitinated with both 'Lys-48' and 'Lys-63' linkages. Deubiquitinated by USP45.

Its subcellular location is the nucleus. The protein localises to the cytoplasm. Non-catalytic component of a structure-specific DNA repair endonuclease responsible for the 5'-incision during DNA repair. Responsible, in conjunction with SLX4, for the first step in the repair of interstrand cross-links (ICL). Participates in the processing of anaphase bridge-generating DNA structures, which consist in incompletely processed DNA lesions arising during S or G2 phase, and can result in cytokinesis failure. Also required for homology-directed repair (HDR) of DNA double-strand breaks, in conjunction with SLX4. Functionally, not functional in the nucleotide excision repair pathway. This chain is DNA excision repair protein ERCC-1 (ERCC1), found in Homo sapiens (Human).